Consider the following 229-residue polypeptide: Non-structural protein P8 (229 aa).

2 helical membrane-spanning segments follow: residues 119-139 (IIHM…VCTL) and 162-182 (SLNP…MVCA).

It belongs to the orbivirus NS3 family. Forms homooligomers via coiled-coil motif. Interacts with host OPTN; this interaction inhibits innate immune response.

It is found in the host cell membrane. It localises to the host Golgi apparatus. Functionally, plays a role in the inhibition of host innate immune response. Interacts with host OPTN and thus inhibits the recruitment of TBK1 to the host Golgi apparatus. In turn, downstream partner IRF3 cannot be activated and IFN-beta production is impaired. In terms of biological role, facilitates viral particle release either by increasing plasma membrane permeability through a viroporin-like activity or by viral budding. This chain is Non-structural protein P8 (Segment-10), found in Antilocapra americana (Pronghorn).